The primary structure comprises 671 residues: DNA ligase (671 aa).

NAD(+)-binding positions include 31–35 (DAEYD), 80–81 (SL), and glutamate 110. The N6-AMP-lysine intermediate role is filled by lysine 112. Residues arginine 133, glutamate 167, lysine 283, and lysine 307 each coordinate NAD(+). Residues cysteine 401, cysteine 404, cysteine 419, and cysteine 424 each coordinate Zn(2+). The region spanning 587–671 (EEELVFTGKT…YLPDEGGLNE (85 aa)) is the BRCT domain.

Belongs to the NAD-dependent DNA ligase family. LigA subfamily. Mg(2+) is required as a cofactor. Requires Mn(2+) as cofactor.

The catalysed reaction is NAD(+) + (deoxyribonucleotide)n-3'-hydroxyl + 5'-phospho-(deoxyribonucleotide)m = (deoxyribonucleotide)n+m + AMP + beta-nicotinamide D-nucleotide.. In terms of biological role, DNA ligase that catalyzes the formation of phosphodiester linkages between 5'-phosphoryl and 3'-hydroxyl groups in double-stranded DNA using NAD as a coenzyme and as the energy source for the reaction. It is essential for DNA replication and repair of damaged DNA. This Listeria monocytogenes serotype 4b (strain F2365) protein is DNA ligase.